A 415-amino-acid chain; its full sequence is Histidine--tRNA ligase (415 aa).

It belongs to the class-II aminoacyl-tRNA synthetase family. As to quaternary structure, homodimer.

It localises to the cytoplasm. It carries out the reaction tRNA(His) + L-histidine + ATP = L-histidyl-tRNA(His) + AMP + diphosphate + H(+). In Rhodospirillum rubrum (strain ATCC 11170 / ATH 1.1.1 / DSM 467 / LMG 4362 / NCIMB 8255 / S1), this protein is Histidine--tRNA ligase.